The chain runs to 172 residues: Adenine phosphoribosyltransferase (172 aa).

It belongs to the purine/pyrimidine phosphoribosyltransferase family. Homodimer.

The protein localises to the cytoplasm. It carries out the reaction AMP + diphosphate = 5-phospho-alpha-D-ribose 1-diphosphate + adenine. It participates in purine metabolism; AMP biosynthesis via salvage pathway; AMP from adenine: step 1/1. Its function is as follows. Catalyzes a salvage reaction resulting in the formation of AMP, that is energically less costly than de novo synthesis. The chain is Adenine phosphoribosyltransferase from Herpetosiphon aurantiacus (strain ATCC 23779 / DSM 785 / 114-95).